We begin with the raw amino-acid sequence, 503 residues long: Probable cytosol aminopeptidase (503 aa).

The Mn(2+) site is built by Lys-274 and Asp-279. Lys-286 is a catalytic residue. Residues Asp-297, Asp-356, and Glu-358 each contribute to the Mn(2+) site. The active site involves Arg-360.

Belongs to the peptidase M17 family. It depends on Mn(2+) as a cofactor.

It localises to the cytoplasm. The enzyme catalyses Release of an N-terminal amino acid, Xaa-|-Yaa-, in which Xaa is preferably Leu, but may be other amino acids including Pro although not Arg or Lys, and Yaa may be Pro. Amino acid amides and methyl esters are also readily hydrolyzed, but rates on arylamides are exceedingly low.. It carries out the reaction Release of an N-terminal amino acid, preferentially leucine, but not glutamic or aspartic acids.. Presumably involved in the processing and regular turnover of intracellular proteins. Catalyzes the removal of unsubstituted N-terminal amino acids from various peptides. The protein is Probable cytosol aminopeptidase of Burkholderia ambifaria (strain MC40-6).